Reading from the N-terminus, the 253-residue chain is Testis-expressed protein 101 (253 aa).

The first 24 residues, 1–24 (MAACWVHYLLLLLLGVSHQTLAQS), serve as a signal peptide directing secretion. 5 N-linked (GlcNAc...) asparagine glycosylation sites follow: asparagine 44, asparagine 112, asparagine 117, asparagine 121, and asparagine 162. The region spanning 53-117 (ETCNPGELCQ…SNYCNSSLCN (65 aa)) is the UPAR/Ly6 1 domain. Residues 143 to 218 (CPTCVALGSC…KETCSYHSLL (76 aa)) enclose the UPAR/Ly6 2 domain. Serine 226 is lipidated: GPI-anchor amidated serine. Residues 227 to 253 (RASGRSTSLWVLELLLPAVLVALTHFP) constitute a propeptide, removed in mature form.

As to quaternary structure, interacts with VAMP3. Interacts with LY6K. Interacts with DPEP3; co-localized on the cell surface of spermatocytes, spermatids, and testicular spermatozoa, co-localized only in cytoplasmic droplets of caput and corpus epididymal sperm. Interacts with ADAM5. N-glycosylated; by high mannose and/or biantennary complex and/or certain types of hybrid oligosaccharides; possesses different oligosaccharides chains according to its subcellular localization in the testis. Post-translationally, sheds from membrane raft by ACE and released from the cell surface of epididymal sperm while it passes through the caput epididymis leading to disappearance of TEX101 on spermatozoa; is essential to produce fertile spermatozoa.

The protein localises to the cell membrane. Its subcellular location is the membrane raft. The protein resides in the cytoplasmic vesicle. It is found in the secretory vesicle. It localises to the acrosome. The protein localises to the secreted. In terms of biological role, plays a role in fertilization by controlling binding of sperm to zona pellucida and migration of spermatozoa into the oviduct. May play a role in signal transduction and promote protein tyrosine phosphorylation. The sequence is that of Testis-expressed protein 101 from Cricetulus griseus (Chinese hamster).